The following is a 227-amino-acid chain: Lipoprotein-releasing system ATP-binding protein LolD (227 aa).

Residues leucine 7–leucine 227 enclose the ABC transporter domain. An ATP-binding site is contributed by alanine 43–serine 50.

This sequence belongs to the ABC transporter superfamily. Lipoprotein translocase (TC 3.A.1.125) family. In terms of assembly, the complex is composed of two ATP-binding proteins (LolD) and two transmembrane proteins (LolC and LolE).

Its subcellular location is the cell inner membrane. Part of the ABC transporter complex LolCDE involved in the translocation of mature outer membrane-directed lipoproteins, from the inner membrane to the periplasmic chaperone, LolA. Responsible for the formation of the LolA-lipoprotein complex in an ATP-dependent manner. In Brucella abortus biovar 1 (strain 9-941), this protein is Lipoprotein-releasing system ATP-binding protein LolD.